The chain runs to 446 residues: NADH-dependent phenylglyoxylate dehydrogenase subunit beta (446 aa).

4Fe-4S ferredoxin-type domains are found at residues 6–35, 49–80, 82–111, and 109–141; these read STIA…TDDI, ADKT…KDGT, GVIG…LDEA, and DEAT…HITT.

In terms of assembly, dimer of heteropentamers composed of an alpha (PadG), a beta (PadI), a gamma (PadE), a delta (PadF) and an epsilon (PadH) subunit. [4Fe-4S] cluster serves as cofactor.

It catalyses the reaction phenylglyoxylate + NAD(+) + CoA = benzoyl-CoA + CO2 + NADH. With respect to regulation, activated by magnesium ions and thiamine diphosphate. Involved in the anaerobic metabolism of phenylalanine and phenylacetate. Catalyzes the oxidative decarboxylation of phenylglyoxylate to benzoyl-CoA and CO(2). It can also react slowly with 2-oxo-3-methylbutanoate and use different electron acceptors such as benzyl viologen, methyl viologen, FAD or FMN, but NAD seems to be the physiological electron acceptor. Also catalyzes an isotope exchange between CO(2) and the carboxyl group which proves partial or complete reversibility of the oxidative decarboxylation reaction. The protein is NADH-dependent phenylglyoxylate dehydrogenase subunit beta (padI) of Aromatoleum evansii (Azoarcus evansii).